The chain runs to 890 residues: Translation initiation factor IF-2 (890 aa).

The disordered stretch occupies residues 110-216 (ISKPISKAPQ…KKPLIKTQDH (107 aa)). The span at 135–148 (VPKRKGLVIIKKKR) shows a compositional bias: basic residues. The span at 184 to 199 (KSYNEPKNKENDDIKK) shows a compositional bias: basic and acidic residues. The segment covering 200–210 (QKVKKEKKKPL) has biased composition (basic residues). One can recognise a tr-type G domain in the interval 387–554 (TRPPVVTIMG…NILLQAEILE (168 aa)). The tract at residues 396–403 (GHVDHGKT) is G1. GTP is bound at residue 396 to 403 (GHVDHGKT). The tract at residues 421–425 (GITQH) is G2. The segment at 442-445 (DTPG) is G3. GTP is bound by residues 442-446 (DTPGH) and 496-499 (NKMD). A G4 region spans residues 496–499 (NKMD). Positions 532 to 534 (SAR) are G5.

This sequence belongs to the TRAFAC class translation factor GTPase superfamily. Classic translation factor GTPase family. IF-2 subfamily.

The protein resides in the cytoplasm. In terms of biological role, one of the essential components for the initiation of protein synthesis. Protects formylmethionyl-tRNA from spontaneous hydrolysis and promotes its binding to the 30S ribosomal subunits. Also involved in the hydrolysis of GTP during the formation of the 70S ribosomal complex. This chain is Translation initiation factor IF-2, found in Aliarcobacter butzleri (strain RM4018) (Arcobacter butzleri).